The primary structure comprises 83 residues: Retinal cone rhodopsin-sensitive cGMP 3',5'-cyclic phosphodiesterase subunit gamma (83 aa).

The segment at 1-51 (MSDSPCLSPPAPSQGPTTPRKGPPKFKQRQTRQFKSKPPKKGVKGFGDDIP) is disordered. Residues 22 to 43 (GPPKFKQRQTRQFKSKPPKKGV) are compositionally biased toward basic residues.

Belongs to the rod/cone cGMP-PDE gamma subunit family. In terms of assembly, tetramer composed of two catalytic chains (alpha and beta), and two inhibitory chains (gamma).

It carries out the reaction 3',5'-cyclic GMP + H2O = GMP + H(+). Its function is as follows. Participates in processes of transmission and amplification of the visual signal. cGMP-PDEs are the effector molecules in G-protein-mediated phototransduction in vertebrate rods and cones. This Rattus norvegicus (Rat) protein is Retinal cone rhodopsin-sensitive cGMP 3',5'-cyclic phosphodiesterase subunit gamma (Pde6h).